A 141-amino-acid chain; its full sequence is Granulocyte-macrophage colony-stimulating factor (141 aa).

Residues Met-1 to Ser-17 form the signal peptide. Ser-22 is a glycosylation site (O-linked (GalNAc...) serine). O-linked (GalNAc...) threonine glycosylation is present at Thr-27. 2 disulfide bridges follow: Cys-68–Cys-110 and Cys-102–Cys-135. 2 N-linked (GlcNAc...) asparagine glycosylation sites follow: Asn-83 and Asn-92.

It belongs to the GM-CSF family. In terms of assembly, monomer. The signaling GM-CSF receptor complex is a dodecamer of two head-to-head hexamers of two alpha, two beta, and two ligand subunits.

The protein resides in the secreted. Its function is as follows. Cytokine that stimulates the growth and differentiation of hematopoietic precursor cells from various lineages, including granulocytes, macrophages, eosinophils and erythrocytes. The polypeptide is Granulocyte-macrophage colony-stimulating factor (Csf2) (Mus musculus (Mouse)).